The sequence spans 83 residues: Small ribosomal subunit protein bS20 (83 aa).

Belongs to the bacterial ribosomal protein bS20 family.

Binds directly to 16S ribosomal RNA. This Flavobacterium johnsoniae (strain ATCC 17061 / DSM 2064 / JCM 8514 / BCRC 14874 / CCUG 350202 / NBRC 14942 / NCIMB 11054 / UW101) (Cytophaga johnsonae) protein is Small ribosomal subunit protein bS20.